A 204-amino-acid chain; its full sequence is Matrix-remodeling-associated protein 7 (204 aa).

A helical membrane pass occupies residues 7 to 27; the sequence is LLAALPALATALALLLAWLLV. The tract at residues 32-148 is disordered; it reads AASPEPARAP…FSFKYSPGKL (117 aa). Over residues 38 to 47 the composition is skewed to pro residues; it reads ARAPPEPAPP. A compositionally biased stretch (low complexity) spans 63-103; the sequence is EPAASPAGPEEPGEPAGLGELGEPAGPGEPEGPGDPAAAPA. Over residues 110–126 the composition is skewed to basic and acidic residues; the sequence is VEARQEEEQDLDGEKGP. A Phosphoserine modification is found at Ser191.

It is found in the membrane. The sequence is that of Matrix-remodeling-associated protein 7 (MXRA7) from Homo sapiens (Human).